A 425-amino-acid chain; its full sequence is MKQVTEQAEDFVDTRSSGTEIREFEDLRSDSSQIRMFDTWEDYGLKEDLLKGIYSIGFETPSFIQKAAIQPIIDGRDIRAQAQSGTGKTGAFAVAALQICDMSQDVTQILVLASTREIAAQNAARFEDLGCFMGARVALLSGGSPIAADKVALEKKPHIVVGTPGRVEHMININELSMDNIKLFVIDEADEMLKAGFQEQVKSIFRRITNKDEVQIAMFSATYDEEELRVSEEILINPVIIDLRYNDQTLKGIRQYFIDLRKEPPFRKGREDYLLPKLVTLYDIFRKQRLGQSIVFINSKEDARIVYDWLIRHEWECELISAELTQAERERTLNRFRGGTGRCLISSGLLSRGIDIQNLSVVFCLDVPSFERKSTYIHRIGRSGRYGRKGIAINIVYEHELKNLKAIERFYNTTIKELPADFSFQ.

Residues 38 to 66 (DTWEDYGLKEDLLKGIYSIGFETPSFIQK) carry the Q motif motif. One can recognise a Helicase ATP-binding domain in the interval 69–241 (IQPIIDGRDI…EEILINPVII (173 aa)). 82 to 89 (AQSGTGKT) contacts ATP. The short motif at 187–190 (DEAD) is the DEAD box element. A Helicase C-terminal domain is found at 252 to 425 (GIRQYFIDLR…KELPADFSFQ (174 aa)).

The protein belongs to the DEAD box helicase family. eIF4A subfamily. In terms of assembly, component of the eIF4F complex, which composition varies with external and internal environmental conditions. It is composed of at least eIF4A, eIF4E and eIF4G.

It is found in the cytoplasm. It carries out the reaction ATP + H2O = ADP + phosphate + H(+). Functionally, ATP-dependent RNA helicase which is a subunit of the eIF4F complex involved in cap recognition and is required for mRNA binding to ribosome. In the current model of translation initiation, eIF4A unwinds RNA secondary structures in the 5'-UTR of mRNAs which is necessary to allow efficient binding of the small ribosomal subunit, and subsequent scanning for the initiator codon. This is ATP-dependent RNA helicase eIF4A (TIF1) from Encephalitozoon cuniculi (strain GB-M1) (Microsporidian parasite).